The sequence spans 427 residues: Trigger factor (427 aa).

The PPIase FKBP-type domain occupies 163–248; that stretch reads GDTVVIDFVG…IHEVKAKEVP (86 aa).

Belongs to the FKBP-type PPIase family. Tig subfamily.

It is found in the cytoplasm. It catalyses the reaction [protein]-peptidylproline (omega=180) = [protein]-peptidylproline (omega=0). Its function is as follows. Involved in protein export. Acts as a chaperone by maintaining the newly synthesized protein in an open conformation. Functions as a peptidyl-prolyl cis-trans isomerase. The polypeptide is Trigger factor (Streptococcus suis (strain 05ZYH33)).